The sequence spans 627 residues: Alpha-terpineol synthase, chloroplastic (627 aa).

A chloroplast-targeting transit peptide spans 1-53 (MAGITGVMNMKLAARPSSGRHSRGCRPAVVPSAGKQMLLVRRHPPGSASWPTR). Residues 13–90 (AARPSSGRHS…EDRASRNTSS (78 aa)) are disordered. (2E)-geranyl diphosphate contacts are provided by arginine 339, aspartate 376, aspartate 380, arginine 518, and aspartate 521. Residues aspartate 376 and aspartate 380 each contribute to the Mg(2+) site. The DDXXD motif signature appears at 376–380 (DDTYD). Mg(2+)-binding residues include aspartate 521, serine 525, and glutamate 529.

The protein belongs to the terpene synthase family. Tpsb subfamily. As to quaternary structure, monomer. Mg(2+) is required as a cofactor. Requires Mn(2+) as cofactor. In terms of tissue distribution, expressed in seedling leaf sheaths and roots.

It is found in the plastid. Its subcellular location is the chloroplast. The catalysed reaction is (2E)-geranyl diphosphate + H2O = (S)-alpha-terpineol + diphosphate. It catalyses the reaction (2E)-geranyl diphosphate = (4S)-limonene + diphosphate. It carries out the reaction (2E)-geranyl diphosphate = gamma-terpinene + diphosphate. The enzyme catalyses (2E)-geranyl diphosphate = beta-myrcene + diphosphate. The catalysed reaction is (2E)-geranyl diphosphate = terpinolene + diphosphate. It catalyses the reaction (2E)-geranyl diphosphate + H2O = 4-terpineol + diphosphate. Its pathway is secondary metabolite biosynthesis; terpenoid biosynthesis. Its function is as follows. Component of the volatile terpenes biosynthesis pathways. Mediates the synthesis of a blend of monoterpenes. Converts mainly geranyl diphosphate to alpha-terpineol. Also triggers the biosynthesis of minor monoterpenes including limonene, gamma-terpinene, beta-myrcene, terpinolene and 4-terpineol. This Zea mays (Maize) protein is Alpha-terpineol synthase, chloroplastic.